The sequence spans 427 residues: Trigger factor (427 aa).

The 86-residue stretch at glycine 163–proline 248 folds into the PPIase FKBP-type domain.

It belongs to the FKBP-type PPIase family. Tig subfamily.

The protein resides in the cytoplasm. It carries out the reaction [protein]-peptidylproline (omega=180) = [protein]-peptidylproline (omega=0). In terms of biological role, involved in protein export. Acts as a chaperone by maintaining the newly synthesized protein in an open conformation. Functions as a peptidyl-prolyl cis-trans isomerase. This Streptococcus agalactiae serotype Ia (strain ATCC 27591 / A909 / CDC SS700) protein is Trigger factor.